A 353-amino-acid chain; its full sequence is Cruciform cutting endonuclease 1, mitochondrial (353 aa).

Asp293 and Asp294 together coordinate Mg(2+).

In terms of assembly, homodimer. It depends on Mg(2+) as a cofactor.

It localises to the mitochondrion. The enzyme catalyses Endonucleolytic cleavage at a junction such as a reciprocal single-stranded crossover between two homologous DNA duplexes (Holliday junction).. Capable of resolving Holliday junctions. Specific for 4-way junctions. Seems to be important for the maintenance of mitochondrial DNA. Cleaves fixed junctions at the point of strand exchange. Cleaves after 5'-CT-3' sequence. The chain is Cruciform cutting endonuclease 1, mitochondrial (CCE1) from Saccharomyces cerevisiae (strain ATCC 204508 / S288c) (Baker's yeast).